The following is an 87-amino-acid chain: Phosphoribosyl-ATP pyrophosphatase (87 aa).

It belongs to the PRA-PH family.

Its subcellular location is the cytoplasm. The catalysed reaction is 1-(5-phospho-beta-D-ribosyl)-ATP + H2O = 1-(5-phospho-beta-D-ribosyl)-5'-AMP + diphosphate + H(+). It functions in the pathway amino-acid biosynthesis; L-histidine biosynthesis; L-histidine from 5-phospho-alpha-D-ribose 1-diphosphate: step 2/9. The sequence is that of Phosphoribosyl-ATP pyrophosphatase from Nocardia farcinica (strain IFM 10152).